Consider the following 177-residue polypeptide: Mitochondrial inner membrane protease subunit 2 (177 aa).

The chain crosses the membrane as a helical span at residues 19-37 (FFVAVPVAVTFLDRVACVA). Active-site residues include Ser-43 and Lys-91.

The protein belongs to the peptidase S26 family. IMP2 subfamily. Heterodimer of 2 subunits, IMMPL1 and IMMPL2.

It is found in the mitochondrion inner membrane. Functionally, catalyzes the removal of transit peptides required for the targeting of proteins from the mitochondrial matrix, across the inner membrane, into the inter-membrane space. Known to process the nuclear encoded protein DIABLO. The chain is Mitochondrial inner membrane protease subunit 2 (IMMP2L) from Bos taurus (Bovine).